Consider the following 497-residue polypeptide: MTYLLALDQGTSSSRSIVFDREGRIVAIAQKELTQIYPRPGWVEHDPMEIWHSQLATARDVLAKAKLQPADIHAIGITNQRETTLLWNRKTGQPVHHAIVWQDRRAEPMCAQLRDQGMAATIQEKTGLVIDAYFSGTKLRWLLDNVPGARAQAERGELAFGTVDSWLMWQLTGGKVHVTDVSNASRTMLFNVHRNEWDADLLKALDIPAALMPSVQPSSSHFADTDAALLGRALPIGGVAGDQQSALFGQACFAAGMAKNTYGTGCFLLMHTGGECQPSHNGLLVTSAAQTSATPQYAMEGSVFVGGAVVQWLRDGLKAIKGSAEVQSLAESVPDAGGVMMVPAFTGLGAPYWDADARGTITGLTRGTTVAHIARAALESIAYQSAALLQAMSRDAVAAGGTPVAELRVDGGASVNDLLMQFQADLLGIPVVRPEVIETTALGAAYLAGLSTGVYSDARQLSKLWKVERRFMPTMGRAQAEESMARWERAVRQATAT.

Position 11 (threonine 11) interacts with ADP. Residues threonine 11, serine 12, and serine 13 each coordinate ATP. Threonine 11 contacts sn-glycerol 3-phosphate. Arginine 15 is an ADP binding site. Sn-glycerol 3-phosphate contacts are provided by arginine 81, glutamate 82, tyrosine 133, and aspartate 242. The glycerol site is built by arginine 81, glutamate 82, tyrosine 133, aspartate 242, and glutamine 243. 2 residues coordinate ADP: threonine 264 and glycine 307. ATP is bound by residues threonine 264, glycine 307, glutamine 311, and glycine 412. ADP contacts are provided by glycine 412 and asparagine 416.

This sequence belongs to the FGGY kinase family.

The enzyme catalyses glycerol + ATP = sn-glycerol 3-phosphate + ADP + H(+). Its pathway is polyol metabolism; glycerol degradation via glycerol kinase pathway; sn-glycerol 3-phosphate from glycerol: step 1/1. With respect to regulation, inhibited by fructose 1,6-bisphosphate (FBP). In terms of biological role, key enzyme in the regulation of glycerol uptake and metabolism. Catalyzes the phosphorylation of glycerol to yield sn-glycerol 3-phosphate. The protein is Glycerol kinase of Variovorax paradoxus (strain S110).